The sequence spans 370 residues: L-selectin (370 aa).

A signal peptide spans 1–28; that stretch reads MLCPWKCQNAQRGLWNVFKLWVWIMLCC. Residues 29 to 38 constitute a propeptide that is removed on maturation; the sequence is DFFAHHGTDC. Residues 39-333 lie on the Extracellular side of the membrane; sequence WTYHYSKRPM…SINEESDYNP (295 aa). The 101-residue stretch at 55–155 folds into the C-type lectin domain; that stretch reads AFCRENYTDL…ACHKAKTALC (101 aa). Intrachain disulfides connect cysteine 57–cysteine 155, cysteine 128–cysteine 147, cysteine 128–cysteine 160, cysteine 160–cysteine 171, cysteine 165–cysteine 180, cysteine 182–cysteine 191, cysteine 197–cysteine 241, cysteine 227–cysteine 254, cysteine 259–cysteine 303, and cysteine 289–cysteine 316. Asparagine 60, asparagine 77, and asparagine 104 each carry an N-linked (GlcNAc...) asparagine glycan. Positions 118, 120, 126, 143, and 144 each coordinate Ca(2+). In terms of domain architecture, EGF-like spans 156–192; the sequence is YTASCKPWSCSGHGQCVEVINNYTCNCDLGYYGPECQ. Asparagine 177 carries N-linked (GlcNAc...) asparagine glycosylation. 2 Sushi domains span residues 195-256 and 257-318; these read TQCV…TCRV and IQCE…RCQK. Asparagine 216, asparagine 226, and asparagine 246 each carry an N-linked (GlcNAc...) asparagine glycan. N-linked (GlcNAc...) asparagine glycosylation is found at asparagine 308 and asparagine 320. The helical transmembrane segment at 334 to 354 threads the bilayer; that stretch reads LFIPVAVMVTAFSGLAFIIWL. Residues 355-370 lie on the Cytoplasmic side of the membrane; it reads ARRLKRKSKKVSEKHG.

It belongs to the selectin/LECAM family. Interaction with SELPLG/PSGL1 and PODXL2 is required for promoting recruitment and rolling of leukocytes. This interaction is dependent on the sialyl Lewis X glycan modification of SELPLG and PODXL2, and tyrosine sulfation modifications of SELPLG. Sulfation on 'Tyr-51' of SELPLG is important for L-selectin binding. In terms of processing, N-glycosylated. In terms of tissue distribution, highly expressed in lymphocytes from peripheral lymph nodes. Low in lymphocytes isolated from Peyer patches.

It is found in the cell membrane. Functionally, calcium-dependent lectin that mediates cell adhesion by binding to glycoproteins on neighboring cells. Mediates the adherence of lymphocytes to endothelial cells of high endothelial venules in peripheral lymph nodes. Promotes initial tethering and rolling of leukocytes in endothelia. In Bos taurus (Bovine), this protein is L-selectin (SELL).